Consider the following 61-residue polypeptide: UPF0434 protein Nmul_A1027 (61 aa).

It belongs to the UPF0434 family.

This Nitrosospira multiformis (strain ATCC 25196 / NCIMB 11849 / C 71) protein is UPF0434 protein Nmul_A1027.